The primary structure comprises 167 residues: Small ribosomal subunit protein uS5 (167 aa).

Positions 12–75 (IEDRVVAINR…ETARKSLIEV (64 aa)) constitute an S5 DRBM domain.

Belongs to the universal ribosomal protein uS5 family. In terms of assembly, part of the 30S ribosomal subunit. Contacts proteins S4 and S8.

Functionally, with S4 and S12 plays an important role in translational accuracy. Its function is as follows. Located at the back of the 30S subunit body where it stabilizes the conformation of the head with respect to the body. This is Small ribosomal subunit protein uS5 from Pediococcus pentosaceus (strain ATCC 25745 / CCUG 21536 / LMG 10740 / 183-1w).